The primary structure comprises 238 residues: Putative csd-like protein HI_1343 (238 aa).

Lysine 146 is modified (N6-(pyridoxal phosphate)lysine).

This sequence belongs to the class-V pyridoxal-phosphate-dependent aminotransferase family. Csd subfamily.

The chain is Putative csd-like protein HI_1343 from Haemophilus influenzae (strain ATCC 51907 / DSM 11121 / KW20 / Rd).